The chain runs to 119 residues: TSIYTCYEGVGLPVDPLQGCHYYVTSQTCGFVPLLPIEVMKDRCCRELAAISSNCRCEGLRVFIDRAFPPSQSQGGGPPQPPLAPRCPTEVKRDFARTLALPGQCNLPTIHGGPYCVFP.

Disulfide bonds link C6/C55, C20/C44, C29/C87, C45/C105, and C57/C116.

Its subcellular location is the secreted. Its function is as follows. Inhibits bovine, insect and wheat chymotrypsins. Inhibits bovine chymotrypsin with Ki of 0.6 nM. Does not inhibit human or wheat alpha-amylases, bovine pancreatic trypsin, or trypsin-like activity isolated from wheat. This is Chymotrypsin inhibitor WCI from Triticum aestivum (Wheat).